A 320-amino-acid chain; its full sequence is 4-hydroxy-3-methylbut-2-enyl diphosphate reductase (320 aa).

Cys-13 is a [4Fe-4S] cluster binding site. The (2E)-4-hydroxy-3-methylbut-2-enyl diphosphate site is built by His-41 and His-75. Dimethylallyl diphosphate-binding residues include His-41 and His-75. Residues His-41 and His-75 each coordinate isopentenyl diphosphate. Cys-97 lines the [4Fe-4S] cluster pocket. Residue His-125 participates in (2E)-4-hydroxy-3-methylbut-2-enyl diphosphate binding. His-125 contributes to the dimethylallyl diphosphate binding site. His-125 lines the isopentenyl diphosphate pocket. Glu-127 (proton donor) is an active-site residue. Residue Thr-168 participates in (2E)-4-hydroxy-3-methylbut-2-enyl diphosphate binding. Residue Cys-225 participates in [4Fe-4S] cluster binding. Residues Ser-253, Ser-254, Asn-255, and Ser-302 each coordinate (2E)-4-hydroxy-3-methylbut-2-enyl diphosphate. Dimethylallyl diphosphate is bound by residues Ser-253, Ser-254, Asn-255, and Ser-302. Residues Ser-253, Ser-254, Asn-255, and Ser-302 each coordinate isopentenyl diphosphate.

It belongs to the IspH family. It depends on [4Fe-4S] cluster as a cofactor.

It catalyses the reaction isopentenyl diphosphate + 2 oxidized [2Fe-2S]-[ferredoxin] + H2O = (2E)-4-hydroxy-3-methylbut-2-enyl diphosphate + 2 reduced [2Fe-2S]-[ferredoxin] + 2 H(+). The enzyme catalyses dimethylallyl diphosphate + 2 oxidized [2Fe-2S]-[ferredoxin] + H2O = (2E)-4-hydroxy-3-methylbut-2-enyl diphosphate + 2 reduced [2Fe-2S]-[ferredoxin] + 2 H(+). The protein operates within isoprenoid biosynthesis; dimethylallyl diphosphate biosynthesis; dimethylallyl diphosphate from (2E)-4-hydroxy-3-methylbutenyl diphosphate: step 1/1. It functions in the pathway isoprenoid biosynthesis; isopentenyl diphosphate biosynthesis via DXP pathway; isopentenyl diphosphate from 1-deoxy-D-xylulose 5-phosphate: step 6/6. Functionally, catalyzes the conversion of 1-hydroxy-2-methyl-2-(E)-butenyl 4-diphosphate (HMBPP) into a mixture of isopentenyl diphosphate (IPP) and dimethylallyl diphosphate (DMAPP). Acts in the terminal step of the DOXP/MEP pathway for isoprenoid precursor biosynthesis. In Chlorobium luteolum (strain DSM 273 / BCRC 81028 / 2530) (Pelodictyon luteolum), this protein is 4-hydroxy-3-methylbut-2-enyl diphosphate reductase.